We begin with the raw amino-acid sequence, 107 residues long: Ribonuclease P protein component 4 (107 aa).

Zn(2+) is bound by residues cysteine 66, cysteine 69, cysteine 92, and cysteine 95.

The protein belongs to the eukaryotic/archaeal RNase P protein component 4 family. In terms of assembly, consists of a catalytic RNA component and at least 4-5 protein subunits. Zn(2+) serves as cofactor.

Its subcellular location is the cytoplasm. It catalyses the reaction Endonucleolytic cleavage of RNA, removing 5'-extranucleotides from tRNA precursor.. In terms of biological role, part of ribonuclease P, a protein complex that generates mature tRNA molecules by cleaving their 5'-ends. This is Ribonuclease P protein component 4 from Methanosarcina mazei (strain ATCC BAA-159 / DSM 3647 / Goe1 / Go1 / JCM 11833 / OCM 88) (Methanosarcina frisia).